Consider the following 571-residue polypeptide: Proline--tRNA ligase (571 aa).

Belongs to the class-II aminoacyl-tRNA synthetase family. ProS type 1 subfamily. Homodimer.

It localises to the cytoplasm. The catalysed reaction is tRNA(Pro) + L-proline + ATP = L-prolyl-tRNA(Pro) + AMP + diphosphate. Catalyzes the attachment of proline to tRNA(Pro) in a two-step reaction: proline is first activated by ATP to form Pro-AMP and then transferred to the acceptor end of tRNA(Pro). As ProRS can inadvertently accommodate and process non-cognate amino acids such as alanine and cysteine, to avoid such errors it has two additional distinct editing activities against alanine. One activity is designated as 'pretransfer' editing and involves the tRNA(Pro)-independent hydrolysis of activated Ala-AMP. The other activity is designated 'posttransfer' editing and involves deacylation of mischarged Ala-tRNA(Pro). The misacylated Cys-tRNA(Pro) is not edited by ProRS. In Glaesserella parasuis serovar 5 (strain SH0165) (Haemophilus parasuis), this protein is Proline--tRNA ligase.